An 811-amino-acid chain; its full sequence is Ent-13-epi-manoyl oxide synthase KSL2, chloroplastic (811 aa).

The N-terminal 49 residues, 1–49, are a transit peptide targeting the chloroplast; sequence MALPLSTCLLFHPKESRSRRFCFSPASAASLKSGLHSATSAKIASMPTC. Mg(2+) is bound by residues aspartate 550, aspartate 554, asparagine 694, and glutamate 702. The DDXXD motif motif lies at 550–554; it reads DDFFD.

It belongs to the terpene synthase family. It depends on Mg(2+) as a cofactor.

Its subcellular location is the plastid. The protein resides in the chloroplast. The enzyme catalyses ent-8alpha-hydroxylabd-13-en-15-yl diphosphate = ent-13-epi-manoyl oxide + diphosphate. It participates in secondary metabolite biosynthesis; terpenoid biosynthesis. Functionally, involved in diterpenoid biosynthesis. Catalyzes the conversion of ent-8alpha-hydroxylabd-13-en-15-yl diphosphate to ent-13-epi-manoyl oxide. The sequence is that of Ent-13-epi-manoyl oxide synthase KSL2, chloroplastic from Salvia miltiorrhiza (Chinese sage).